Here is a 433-residue protein sequence, read N- to C-terminus: 3-phosphoshikimate 1-carboxyvinyltransferase (433 aa).

3 residues coordinate 3-phosphoshikimate: Lys15, Ser16, and Arg20. Position 15 (Lys15) interacts with phosphoenolpyruvate. Phosphoenolpyruvate-binding residues include Gly96 and Arg124. 5 residues coordinate 3-phosphoshikimate: Ser169, Gln171, Ser195, Asp318, and Lys345. Gln171 is a phosphoenolpyruvate binding site. Asp318 acts as the Proton acceptor in catalysis. Phosphoenolpyruvate-binding residues include Arg349 and Arg393.

The protein belongs to the EPSP synthase family. As to quaternary structure, monomer.

It is found in the cytoplasm. The enzyme catalyses 3-phosphoshikimate + phosphoenolpyruvate = 5-O-(1-carboxyvinyl)-3-phosphoshikimate + phosphate. Its pathway is metabolic intermediate biosynthesis; chorismate biosynthesis; chorismate from D-erythrose 4-phosphate and phosphoenolpyruvate: step 6/7. Its function is as follows. Catalyzes the transfer of the enolpyruvyl moiety of phosphoenolpyruvate (PEP) to the 5-hydroxyl of shikimate-3-phosphate (S3P) to produce enolpyruvyl shikimate-3-phosphate and inorganic phosphate. The chain is 3-phosphoshikimate 1-carboxyvinyltransferase from Pelodictyon phaeoclathratiforme (strain DSM 5477 / BU-1).